Reading from the N-terminus, the 125-residue chain is Large ribosomal subunit protein bL12 (125 aa).

The protein belongs to the bacterial ribosomal protein bL12 family. As to quaternary structure, homodimer. Part of the ribosomal stalk of the 50S ribosomal subunit. Forms a multimeric L10(L12)X complex, where L10 forms an elongated spine to which 2 to 4 L12 dimers bind in a sequential fashion. Binds GTP-bound translation factors.

Its function is as follows. Forms part of the ribosomal stalk which helps the ribosome interact with GTP-bound translation factors. Is thus essential for accurate translation. The polypeptide is Large ribosomal subunit protein bL12 (Bradyrhizobium sp. (strain BTAi1 / ATCC BAA-1182)).